We begin with the raw amino-acid sequence, 202 residues long: Small ribosomal subunit protein uS4 (202 aa).

The S4 RNA-binding domain maps to 94–157 (SRLDSLVYRA…LEMPLIKNTL (64 aa)).

This sequence belongs to the universal ribosomal protein uS4 family. Part of the 30S ribosomal subunit. Contacts protein S5. The interaction surface between S4 and S5 is involved in control of translational fidelity.

Its function is as follows. One of the primary rRNA binding proteins, it binds directly to 16S rRNA where it nucleates assembly of the body of the 30S subunit. Functionally, with S5 and S12 plays an important role in translational accuracy. In Ureaplasma urealyticum serovar 10 (strain ATCC 33699 / Western), this protein is Small ribosomal subunit protein uS4.